Reading from the N-terminus, the 213-residue chain is E3 ubiquitin-protein ligase NleG8 (213 aa).

The tract at residues 136–189 (CPITLCVPETGVFVKNARCSKVCSLYDISALTEMLRRNASHPLSREAFTPGMIV) is RING/U-box domain. Residues 211–213 (TRL) carry the PDZ-binding motif motif.

It belongs to the NleG E3 ligase family. Interacts with host GOPC (human protein).

The protein localises to the secreted. Its subcellular location is the host cytoplasm. The enzyme catalyses S-ubiquitinyl-[E2 ubiquitin-conjugating enzyme]-L-cysteine + [acceptor protein]-L-lysine = [E2 ubiquitin-conjugating enzyme]-L-cysteine + N(6)-ubiquitinyl-[acceptor protein]-L-lysine.. Functionally, effector proteins function to alter host cell physiology and promote bacterial survival in host tissues. This protein is an E3 ubiquitin-protein ligase that probably interferes with the host's ubiquitination pathway and targets host proteins for proteasomal degradation. Mice infected with a strain of bacteria deleted for this gene had an increased survival rate. Can be ubiquitinylated, and ubiquitinate ubiquitin, giving rise to polyubiquitin chains (in vitro). The chain is E3 ubiquitin-protein ligase NleG8 from Citrobacter rodentium.